The following is a 444-amino-acid chain: Phosphoglucosamine mutase (444 aa).

Residue Ser-102 is the Phosphoserine intermediate of the active site. Mg(2+)-binding residues include Ser-102, Asp-241, Asp-243, and Asp-245. A Phosphoserine modification is found at Ser-102.

The protein belongs to the phosphohexose mutase family. It depends on Mg(2+) as a cofactor. In terms of processing, activated by phosphorylation.

It carries out the reaction alpha-D-glucosamine 1-phosphate = D-glucosamine 6-phosphate. Catalyzes the conversion of glucosamine-6-phosphate to glucosamine-1-phosphate. In Actinobacillus pleuropneumoniae serotype 7 (strain AP76), this protein is Phosphoglucosamine mutase.